The chain runs to 461 residues: Bifunctional protein GlmU (461 aa).

The interval 1-230 is pyrophosphorylase; it reads MSKIHAVVLA…PEETLGVNDR (230 aa). UDP-N-acetyl-alpha-D-glucosamine contacts are provided by residues 9–12, lysine 23, glutamine 73, 78–79, 101–103, glycine 140, glutamate 155, asparagine 170, and asparagine 228; these read LAAG, GT, and YGD. Aspartate 103 lines the Mg(2+) pocket. Residue asparagine 228 coordinates Mg(2+). The interval 231 to 251 is linker; sequence VQLSEAEAYMKKRIMTGHMRN. Residues 252–461 form an N-acetyltransferase region; that stretch reads GVTIIDPTST…KMPRKGKKQS (210 aa). Residues arginine 333 and lysine 351 each coordinate UDP-N-acetyl-alpha-D-glucosamine. Histidine 363 serves as the catalytic Proton acceptor. The UDP-N-acetyl-alpha-D-glucosamine site is built by tyrosine 366 and asparagine 377. Acetyl-CoA contacts are provided by residues 386-387, alanine 423, and arginine 440; that span reads NY.

The protein in the N-terminal section; belongs to the N-acetylglucosamine-1-phosphate uridyltransferase family. It in the C-terminal section; belongs to the transferase hexapeptide repeat family. As to quaternary structure, homotrimer. It depends on Mg(2+) as a cofactor.

The protein localises to the cytoplasm. The enzyme catalyses alpha-D-glucosamine 1-phosphate + acetyl-CoA = N-acetyl-alpha-D-glucosamine 1-phosphate + CoA + H(+). It catalyses the reaction N-acetyl-alpha-D-glucosamine 1-phosphate + UTP + H(+) = UDP-N-acetyl-alpha-D-glucosamine + diphosphate. It participates in nucleotide-sugar biosynthesis; UDP-N-acetyl-alpha-D-glucosamine biosynthesis; N-acetyl-alpha-D-glucosamine 1-phosphate from alpha-D-glucosamine 6-phosphate (route II): step 2/2. Its pathway is nucleotide-sugar biosynthesis; UDP-N-acetyl-alpha-D-glucosamine biosynthesis; UDP-N-acetyl-alpha-D-glucosamine from N-acetyl-alpha-D-glucosamine 1-phosphate: step 1/1. The protein operates within bacterial outer membrane biogenesis; LPS lipid A biosynthesis. Its function is as follows. Catalyzes the last two sequential reactions in the de novo biosynthetic pathway for UDP-N-acetylglucosamine (UDP-GlcNAc). The C-terminal domain catalyzes the transfer of acetyl group from acetyl coenzyme A to glucosamine-1-phosphate (GlcN-1-P) to produce N-acetylglucosamine-1-phosphate (GlcNAc-1-P), which is converted into UDP-GlcNAc by the transfer of uridine 5-monophosphate (from uridine 5-triphosphate), a reaction catalyzed by the N-terminal domain. In Brevibacillus brevis (strain 47 / JCM 6285 / NBRC 100599), this protein is Bifunctional protein GlmU.